The chain runs to 325 residues: ATP phosphoribosyltransferase (325 aa).

Belongs to the ATP phosphoribosyltransferase family. Long subfamily. Mg(2+) serves as cofactor.

Its subcellular location is the cytoplasm. The enzyme catalyses 1-(5-phospho-beta-D-ribosyl)-ATP + diphosphate = 5-phospho-alpha-D-ribose 1-diphosphate + ATP. Its pathway is amino-acid biosynthesis; L-histidine biosynthesis; L-histidine from 5-phospho-alpha-D-ribose 1-diphosphate: step 1/9. Its activity is regulated as follows. Feedback inhibited by histidine. Its function is as follows. Catalyzes the condensation of ATP and 5-phosphoribose 1-diphosphate to form N'-(5'-phosphoribosyl)-ATP (PR-ATP). Has a crucial role in the pathway because the rate of histidine biosynthesis seems to be controlled primarily by regulation of HisG enzymatic activity. This Rhodopseudomonas palustris (strain HaA2) protein is ATP phosphoribosyltransferase.